The chain runs to 337 residues: Protein BIG GRAIN 1-like (337 aa).

Disordered regions lie at residues 1–32, 120–163, and 179–235; these read MRDM…PSFS, SAAG…RPAS, and KRPS…PSRS. Basic and acidic residues predominate over residues 137–146; the sequence is HEQPDVEKTA. Composition is skewed to low complexity over residues 150-163 and 195-209; these read PGSA…RPAS and PACS…SSYA.

It belongs to the BIG GRAIN 1 (BG1) plant protein family.

The protein resides in the cell membrane. Functionally, involved in auxin transport. Regulator of the auxin signaling pathway. The protein is Protein BIG GRAIN 1-like of Oryza sativa subsp. japonica (Rice).